The sequence spans 208 residues: Small ribosomal subunit protein uS4 (208 aa).

The region spanning 98 to 160 (CRLDNVVYRM…AKKQSRIQLA (63 aa)) is the S4 RNA-binding domain.

Belongs to the universal ribosomal protein uS4 family. In terms of assembly, part of the 30S ribosomal subunit. Contacts protein S5. The interaction surface between S4 and S5 is involved in control of translational fidelity.

One of the primary rRNA binding proteins, it binds directly to 16S rRNA where it nucleates assembly of the body of the 30S subunit. Functionally, with S5 and S12 plays an important role in translational accuracy. This is Small ribosomal subunit protein uS4 from Vesicomyosocius okutanii subsp. Calyptogena okutanii (strain HA).